Consider the following 101-residue polypeptide: HNMFLEGTLLKPNMVTAGQGCPKKYTPEDIARATVTALNRTVPAAVAGITFLSGGQSEEDATINLNAINQFPGRKPWPLTFSYGRALQASVLKAWGGKDEL.

Catalysis depends on lysine 11, which acts as the Schiff-base intermediate with dihydroxyacetone-P.

This sequence belongs to the class I fructose-bisphosphate aldolase family.

It catalyses the reaction beta-D-fructose 1,6-bisphosphate = D-glyceraldehyde 3-phosphate + dihydroxyacetone phosphate. It participates in carbohydrate degradation; glycolysis; D-glyceraldehyde 3-phosphate and glycerone phosphate from D-glucose: step 4/4. The polypeptide is Fructose-bisphosphate aldolase (Lymnaea stagnalis (Great pond snail)).